The sequence spans 241 residues: DNA repair protein RecO (241 aa).

It belongs to the RecO family.

Involved in DNA repair and RecF pathway recombination. The protein is DNA repair protein RecO of Yersinia enterocolitica serotype O:8 / biotype 1B (strain NCTC 13174 / 8081).